The chain runs to 477 residues: Glycogen synthase (477 aa).

Residue K15 coordinates ADP-alpha-D-glucose.

This sequence belongs to the glycosyltransferase 1 family. Bacterial/plant glycogen synthase subfamily.

The enzyme catalyses [(1-&gt;4)-alpha-D-glucosyl](n) + ADP-alpha-D-glucose = [(1-&gt;4)-alpha-D-glucosyl](n+1) + ADP + H(+). It participates in glycan biosynthesis; glycogen biosynthesis. In terms of biological role, synthesizes alpha-1,4-glucan chains using ADP-glucose. The sequence is that of Glycogen synthase from Erwinia tasmaniensis (strain DSM 17950 / CFBP 7177 / CIP 109463 / NCPPB 4357 / Et1/99).